A 317-amino-acid chain; its full sequence is D-alanine--D-alanine ligase (317 aa).

Positions 103 to 299 constitute an ATP-grasp domain; the sequence is KHIFRSLNID…FNELVKIIIE (197 aa). Residue 130 to 183 participates in ATP binding; sequence KIDYPYVLKPINEGSSIGVYIIFSHEDYLELKDNSSTIMEKMIVEEYIPGIELH. 3 residues coordinate Mg(2+): Asp251, Glu265, and Asn267.

Belongs to the D-alanine--D-alanine ligase family. Mg(2+) serves as cofactor. Mn(2+) is required as a cofactor.

It localises to the cytoplasm. It catalyses the reaction 2 D-alanine + ATP = D-alanyl-D-alanine + ADP + phosphate + H(+). Its pathway is cell wall biogenesis; peptidoglycan biosynthesis. Cell wall formation. The sequence is that of D-alanine--D-alanine ligase from Wolbachia sp. subsp. Drosophila simulans (strain wRi).